The sequence spans 24 residues: Caerin-2.1 (24 aa).

Belongs to the frog skin active peptide (FSAP) family. Caerin subfamily. As to expression, expressed by the skin dorsal glands.

The protein resides in the secreted. In terms of biological role, inhibits the formation of NO by neuronal nitric oxide synthase. The chain is Caerin-2.1 from Litoria rothii (Roth's tree frog).